Consider the following 384-residue polypeptide: Glucans biosynthesis protein C (384 aa).

Transmembrane regions (helical) follow at residues 17–37 (AWLMLLGIPFHISLIYSTHSW), 54–74 (FIHAFRMQVFFVISGYFSYML), 91–111 (VGIPMLTAIPLLTLPQFILLQ), 140–160 (LWFLLVLVILTTVSIGIFTWF), 173–193 (AISLVRLSLIFFLLGMAYAAI), 212–232 (FIVMQTLFYVPFFILGALAFI), 240–260 (FTTPSRGCTLGAAVAFIAYLL), 274–294 (TESVITMVMGLWMVNVVFSLG), 311–331 (ASLFIYLVHHPLTLFFGAYIT), and 338–358 (LIGFLCGLIFVMGIALILYEI).

It belongs to the acyltransferase 3 family. OpgC subfamily.

Its subcellular location is the cell membrane. Its pathway is glycan metabolism; osmoregulated periplasmic glucan (OPG) biosynthesis. In terms of biological role, necessary for the succinyl substitution of periplasmic glucans. Could catalyze the transfer of succinyl residues from the cytoplasmic side of the membrane to the nascent glucan backbones on the periplasmic side of the membrane. The polypeptide is Glucans biosynthesis protein C (Salmonella gallinarum (strain 287/91 / NCTC 13346)).